Consider the following 745-residue polypeptide: Serine/threonine-protein kinase GG21441 (745 aa).

A disordered region spans residues R49–T73. A compositionally biased stretch (basic and acidic residues) spans K57 to D67. Doublecortin domains are found at residues L159 to N245 and R315 to F398. One can recognise a Protein kinase domain in the interval Y479 to T737. Residues I485 to V493 and K508 contribute to the ATP site. The active-site Proton acceptor is the D600.

It belongs to the protein kinase superfamily. CAMK Ser/Thr protein kinase family. CaMK subfamily.

The catalysed reaction is L-seryl-[protein] + ATP = O-phospho-L-seryl-[protein] + ADP + H(+). It catalyses the reaction L-threonyl-[protein] + ATP = O-phospho-L-threonyl-[protein] + ADP + H(+). This is Serine/threonine-protein kinase GG21441 from Drosophila erecta (Fruit fly).